Consider the following 69-residue polypeptide: Sec-independent protein translocase protein TatA (69 aa).

A helical transmembrane segment spans residues 1-21 (MFGLGGQELILILLIILLLFG).

It belongs to the TatA/E family. As to quaternary structure, forms a complex with TatC.

The protein localises to the cell inner membrane. Part of the twin-arginine translocation (Tat) system that transports large folded proteins containing a characteristic twin-arginine motif in their signal peptide across membranes. TatA could form the protein-conducting channel of the Tat system. This chain is Sec-independent protein translocase protein TatA, found in Pelodictyon phaeoclathratiforme (strain DSM 5477 / BU-1).